Consider the following 191-residue polypeptide: Peptidyl-tRNA hydrolase (191 aa).

Y17 serves as a coordination point for tRNA. H22 functions as the Proton acceptor in the catalytic mechanism. Residues Y68, N70, and N116 each coordinate tRNA.

It belongs to the PTH family. As to quaternary structure, monomer.

Its subcellular location is the cytoplasm. It catalyses the reaction an N-acyl-L-alpha-aminoacyl-tRNA + H2O = an N-acyl-L-amino acid + a tRNA + H(+). Hydrolyzes ribosome-free peptidyl-tRNAs (with 1 or more amino acids incorporated), which drop off the ribosome during protein synthesis, or as a result of ribosome stalling. Its function is as follows. Catalyzes the release of premature peptidyl moieties from peptidyl-tRNA molecules trapped in stalled 50S ribosomal subunits, and thus maintains levels of free tRNAs and 50S ribosomes. This Francisella tularensis subsp. holarctica (strain FTNF002-00 / FTA) protein is Peptidyl-tRNA hydrolase.